The sequence spans 457 residues: Adenylosuccinate synthetase isozyme 2 A (457 aa).

GTP contacts are provided by residues 40-46 and 68-70; these read GDEGKGK and GHT. Catalysis depends on Asp41, which acts as the Proton acceptor. 2 residues coordinate Mg(2+): Asp41 and Gly68. Substrate is bound at residue Asp41. IMP-binding positions include 41–44, 66–69, Thr163, Arg177, Asn256, Thr271, and Arg335; these read DEGK and NAGH. The Proton donor role is filled by His69. 331 to 337 lines the substrate pocket; sequence VTTGRKR. Residues Arg337, 363 to 365, and 445 to 448 contribute to the GTP site; these read KLD and GVGK.

It belongs to the adenylosuccinate synthetase family. In terms of assembly, homodimer. Mg(2+) serves as cofactor.

The protein resides in the cytoplasm. It localises to the mitochondrion. It carries out the reaction IMP + L-aspartate + GTP = N(6)-(1,2-dicarboxyethyl)-AMP + GDP + phosphate + 2 H(+). Its pathway is purine metabolism; AMP biosynthesis via de novo pathway; AMP from IMP: step 1/2. Its activity is regulated as follows. Inhibited competitively by AMP and IMP and non-competitively by fructose 1,6-bisphosphate. In terms of biological role, plays an important role in the de novo pathway and in the salvage pathway of purine nucleotide biosynthesis. Catalyzes the first committed step in the biosynthesis of AMP from IMP. This Xenopus tropicalis (Western clawed frog) protein is Adenylosuccinate synthetase isozyme 2 A (adss2-a).